The sequence spans 287 residues: MLLKGTPVAERILEKLKQKISQSPTPPGLAVVLIGNDPASEVYVGMKVKKAMNLGMVSKAHRLPSDATLTDILKLIERLNNDPTIHGILVQIPLPKHLDSNVIIQAISPEKDVDGLHPVNMGKLLLGQLGGFSPCTPAAVIELLNYYDIPLQGRHVAVVGRSNIVGKPLAAMLMQKHPTTNATVTLLHSQSQNFTEILKTADIIVAAVGVPLFIQENMISPNAVIVDVGISRVATNNDKGYMLVGDVDFNNVVTKCKAITPVPGGVGPMTVAMLMKNTWESYQKSSS.

NADP(+) is bound by residues 160 to 162 (GRS), S189, and I230.

Belongs to the tetrahydrofolate dehydrogenase/cyclohydrolase family. Homodimer.

It catalyses the reaction (6R)-5,10-methylene-5,6,7,8-tetrahydrofolate + NADP(+) = (6R)-5,10-methenyltetrahydrofolate + NADPH. It carries out the reaction (6R)-5,10-methenyltetrahydrofolate + H2O = (6R)-10-formyltetrahydrofolate + H(+). Its pathway is one-carbon metabolism; tetrahydrofolate interconversion. Functionally, catalyzes the oxidation of 5,10-methylenetetrahydrofolate to 5,10-methenyltetrahydrofolate and then the hydrolysis of 5,10-methenyltetrahydrofolate to 10-formyltetrahydrofolate. The protein is Bifunctional protein FolD of Chlamydia felis (strain Fe/C-56) (Chlamydophila felis).